The following is a 329-amino-acid chain: Isopentenyl-diphosphate delta-isomerase (329 aa).

4–5 is a substrate binding site; the sequence is RK. FMN is bound by residues 59–61, Ser89, and Asn116; that span reads AMT. Substrate is bound at residue Gln146. Glu147 lines the Mg(2+) pocket. Residues Lys178, Ser203, Thr208, 252-254, and 273-274 contribute to the FMN site; these read GVR and SR.

The protein belongs to the IPP isomerase type 2 family. In terms of assembly, homooctamer. Dimer of tetramers. Requires FMN as cofactor. NADPH is required as a cofactor. The cofactor is Mg(2+).

It is found in the cytoplasm. The enzyme catalyses isopentenyl diphosphate = dimethylallyl diphosphate. Its function is as follows. Involved in the biosynthesis of isoprenoids. Catalyzes the 1,3-allylic rearrangement of the homoallylic substrate isopentenyl (IPP) to its allylic isomer, dimethylallyl diphosphate (DMAPP). This chain is Isopentenyl-diphosphate delta-isomerase, found in Streptococcus pyogenes serotype M28 (strain MGAS6180).